A 199-amino-acid polypeptide reads, in one-letter code: NAD(P)H dehydrogenase (quinone) (199 aa).

The region spanning valine 4–valine 190 is the Flavodoxin-like domain. FMN-binding positions include serine 10–methionine 15 and threonine 78–tyrosine 80. An NAD(+)-binding site is contributed by tyrosine 12. Tryptophan 98 contributes to the substrate binding site. Residues serine 113 to glycine 119 and histidine 134 each bind FMN. The interval glycine 157 to phenylalanine 185 is disordered. The segment covering methionine 163–glutamate 177 has biased composition (polar residues).

It belongs to the WrbA family. It depends on FMN as a cofactor.

The catalysed reaction is a quinone + NADH + H(+) = a quinol + NAD(+). It catalyses the reaction a quinone + NADPH + H(+) = a quinol + NADP(+). The chain is NAD(P)H dehydrogenase (quinone) from Brucella anthropi (strain ATCC 49188 / DSM 6882 / CCUG 24695 / JCM 21032 / LMG 3331 / NBRC 15819 / NCTC 12168 / Alc 37) (Ochrobactrum anthropi).